Reading from the N-terminus, the 316-residue chain is UDP-N-acetylenolpyruvoylglucosamine reductase (316 aa).

The FAD-binding PCMH-type domain maps to 27–225 (VGGKAERFYR…KTAINALLKK (199 aa)). The active site involves arginine 190. The Proton donor role is filled by serine 239. Glutamate 309 is a catalytic residue.

The protein belongs to the MurB family. Requires FAD as cofactor.

Its subcellular location is the cytoplasm. The enzyme catalyses UDP-N-acetyl-alpha-D-muramate + NADP(+) = UDP-N-acetyl-3-O-(1-carboxyvinyl)-alpha-D-glucosamine + NADPH + H(+). Its pathway is cell wall biogenesis; peptidoglycan biosynthesis. Functionally, cell wall formation. This chain is UDP-N-acetylenolpyruvoylglucosamine reductase, found in Coxiella burnetii (strain CbuG_Q212) (Coxiella burnetii (strain Q212)).